The following is a 172-amino-acid chain: NAD(P)H-quinone oxidoreductase subunit I, chloroplastic (172 aa).

2 4Fe-4S ferredoxin-type domains span residues 55–84 (GRIHFEFDKCIACEVCVRVCPIDLPVVDWK) and 95–124 (LNYSIDFGICIFCGNCVEYCPTNCLSMTEE). The [4Fe-4S] cluster site is built by C64, C67, C70, C74, C104, C107, C110, and C114.

It belongs to the complex I 23 kDa subunit family. In terms of assembly, NDH is composed of at least 16 different subunits, 5 of which are encoded in the nucleus. [4Fe-4S] cluster is required as a cofactor.

It localises to the plastid. It is found in the chloroplast thylakoid membrane. It catalyses the reaction a plastoquinone + NADH + (n+1) H(+)(in) = a plastoquinol + NAD(+) + n H(+)(out). The enzyme catalyses a plastoquinone + NADPH + (n+1) H(+)(in) = a plastoquinol + NADP(+) + n H(+)(out). NDH shuttles electrons from NAD(P)H:plastoquinone, via FMN and iron-sulfur (Fe-S) centers, to quinones in the photosynthetic chain and possibly in a chloroplast respiratory chain. The immediate electron acceptor for the enzyme in this species is believed to be plastoquinone. Couples the redox reaction to proton translocation, and thus conserves the redox energy in a proton gradient. In Capsella bursa-pastoris (Shepherd's purse), this protein is NAD(P)H-quinone oxidoreductase subunit I, chloroplastic.